A 74-amino-acid chain; its full sequence is MKTDFNQKIEQLKEFIEECRRVWLVLKKPTKDEYLAVAKVTALGISLLGIIGYIIHVPATYIKGILKPPTTPRV.

Residues 1–36 (MKTDFNQKIEQLKEFIEECRRVWLVLKKPTKDEYLA) are Cytoplasmic-facing. Residues 37–62 (VAKVTALGISLLGIIGYIIHVPATYI) form a helical membrane-spanning segment. The Extracellular segment spans residues 63–74 (KGILKPPTTPRV).

Belongs to the SecE/SEC61-gamma family. Component of the Sec protein translocase complex. Heterotrimer consisting of alpha (SecY), beta (SecG) and gamma (SecE) subunits. The heterotrimers can form oligomers, although 1 heterotrimer is thought to be able to translocate proteins. Interacts with the ribosome. May interact with SecDF, and other proteins may be involved.

It localises to the cell membrane. In terms of biological role, essential subunit of the protein translocation channel SecYEG. Clamps together the 2 halves of SecY. May contact the channel plug during translocation. This Methanocaldococcus jannaschii (strain ATCC 43067 / DSM 2661 / JAL-1 / JCM 10045 / NBRC 100440) (Methanococcus jannaschii) protein is Protein translocase subunit SecE.